Here is a 214-residue protein sequence, read N- to C-terminus: Probable nicotinate-nucleotide adenylyltransferase (214 aa).

This sequence belongs to the NadD family.

The enzyme catalyses nicotinate beta-D-ribonucleotide + ATP + H(+) = deamido-NAD(+) + diphosphate. Its pathway is cofactor biosynthesis; NAD(+) biosynthesis; deamido-NAD(+) from nicotinate D-ribonucleotide: step 1/1. Functionally, catalyzes the reversible adenylation of nicotinate mononucleotide (NaMN) to nicotinic acid adenine dinucleotide (NaAD). This is Probable nicotinate-nucleotide adenylyltransferase from Aeromonas hydrophila subsp. hydrophila (strain ATCC 7966 / DSM 30187 / BCRC 13018 / CCUG 14551 / JCM 1027 / KCTC 2358 / NCIMB 9240 / NCTC 8049).